A 160-amino-acid polypeptide reads, in one-letter code: MKQVVLNIVIAFLWVLFQDEDEFKFTTFFAGFLIGLIVIYILHRFFGEEFYLKKIWVAIKFLAVYLYQLITSSISTINYILFKTNEVNPGLLTYETSLKSNWAITFLTILIIITPGSTVIRISKNTNKFFIHSIDVSEKDKENLLKSIKQYEDLILEVTR.

A run of 3 helical transmembrane segments spans residues 23 to 43 (FKFT…YILH), 55 to 75 (IWVA…SSIS), and 100 to 120 (SNWA…STVI).

It belongs to the CPA3 antiporters (TC 2.A.63) subunit E family. May form a heterooligomeric complex that consists of seven subunits: mnhA2, mnhB2, mnhC2, mnhD2, mnhE2, mnhF2 and mnhG2.

The protein resides in the cell membrane. In Staphylococcus epidermidis (strain ATCC 35984 / DSM 28319 / BCRC 17069 / CCUG 31568 / BM 3577 / RP62A), this protein is Putative antiporter subunit mnhE2 (mnhE2).